Consider the following 20-residue polypeptide: Zinc metalloproteinase-disintegrin-like uracoina-1 (20 aa).

Belongs to the venom metalloproteinase (M12B) family. P-III subfamily. As to quaternary structure, monomer. Zn(2+) serves as cofactor. Expressed by the venom gland.

It localises to the secreted. Inhibited by ethylenediaminetetraacetic acid (EDTA) and 1,10-phenanthroline. Not inhibited by tosyl-L-lysine chloromethyl ketone (TCLK) and phenylmethanesulfonylfluoride (PMSF). Snake venom zinc metalloprotease that possesses hemorrhagic activity (minimum hemorrhagic dose, MHD=4.7 ug) when injected intradermally into mice. Degrades the alpha-chain of fibrinogen (FGA). This Crotalus vegrandis (Uracoan rattlesnake) protein is Zinc metalloproteinase-disintegrin-like uracoina-1.